Consider the following 233-residue polypeptide: Uracil-DNA glycosylase (233 aa).

Catalysis depends on Asp70, which acts as the Proton acceptor.

This sequence belongs to the uracil-DNA glycosylase (UDG) superfamily. UNG family.

The protein resides in the cytoplasm. It catalyses the reaction Hydrolyzes single-stranded DNA or mismatched double-stranded DNA and polynucleotides, releasing free uracil.. Its function is as follows. Excises uracil residues from the DNA which can arise as a result of misincorporation of dUMP residues by DNA polymerase or due to deamination of cytosine. This Oleidesulfovibrio alaskensis (strain ATCC BAA-1058 / DSM 17464 / G20) (Desulfovibrio alaskensis) protein is Uracil-DNA glycosylase.